The following is a 312-amino-acid chain: Aspartate carbamoyltransferase catalytic subunit (312 aa).

Carbamoyl phosphate-binding residues include Arg58 and Thr59. Lys86 lines the L-aspartate pocket. Arg108, His136, and Gln139 together coordinate carbamoyl phosphate. Positions 169 and 223 each coordinate L-aspartate. Gly264 and Pro265 together coordinate carbamoyl phosphate.

Belongs to the aspartate/ornithine carbamoyltransferase superfamily. ATCase family. As to quaternary structure, heterododecamer (2C3:3R2) of six catalytic PyrB chains organized as two trimers (C3), and six regulatory PyrI chains organized as three dimers (R2).

The catalysed reaction is carbamoyl phosphate + L-aspartate = N-carbamoyl-L-aspartate + phosphate + H(+). It participates in pyrimidine metabolism; UMP biosynthesis via de novo pathway; (S)-dihydroorotate from bicarbonate: step 2/3. Its function is as follows. Catalyzes the condensation of carbamoyl phosphate and aspartate to form carbamoyl aspartate and inorganic phosphate, the committed step in the de novo pyrimidine nucleotide biosynthesis pathway. The chain is Aspartate carbamoyltransferase catalytic subunit from Desulforapulum autotrophicum (strain ATCC 43914 / DSM 3382 / VKM B-1955 / HRM2) (Desulfobacterium autotrophicum).